Consider the following 244-residue polypeptide: Large ribosomal subunit protein bL25 (244 aa).

Positions 197-244 are disordered; it reads ADVEAEAAEAALAKEAATEAAEEEETEKPASEAEASGEAEQADTDKKE. Residues 204 to 215 show a composition bias toward low complexity; the sequence is AEAALAKEAATE.

It belongs to the bacterial ribosomal protein bL25 family. CTC subfamily. As to quaternary structure, part of the 50S ribosomal subunit; part of the 5S rRNA/L5/L18/L25 subcomplex. Contacts the 5S rRNA. Binds to the 5S rRNA independently of L5 and L18.

In terms of biological role, this is one of the proteins that binds to the 5S RNA in the ribosome where it forms part of the central protuberance. This chain is Large ribosomal subunit protein bL25, found in Coxiella burnetii (strain CbuK_Q154) (Coxiella burnetii (strain Q154)).